The primary structure comprises 315 residues: Ribosome biogenesis protein BRX1 homolog 1 (315 aa).

The segment at 1–35 is disordered; sequence MGRKRKHSETVTAAPVKDSAPERPQRTLLGWKDKK. The span at 19–35 shows a compositional bias: basic and acidic residues; sequence SAPERPQRTLLGWKDKK. Residues 53–256 enclose the Brix domain; the sequence is EKVLVTCSRR…PIKIFGGSFG (204 aa).

The protein belongs to the BRX1 family. As to expression, expressed in roots, rosette leaves, stems, flowers, siliques and seeds.

The protein resides in the nucleus. It localises to the nucleolus. Its function is as follows. Involved in pre-rRNA processing and required for biogenesis of the large (60S) ribosomal subunit. Required for proper development. The sequence is that of Ribosome biogenesis protein BRX1 homolog 1 from Arabidopsis thaliana (Mouse-ear cress).